Here is a 228-residue protein sequence, read N- to C-terminus: 2,3-bisphosphoglycerate-dependent phosphoglycerate mutase (228 aa).

Substrate contacts are provided by residues 8-15, 21-22, Arg60, 87-90, Lys98, 114-115, and 183-184; these read RHGQSEWN, TG, ERHY, RR, and GN. The active-site Tele-phosphohistidine intermediate is the His9. Glu87 (proton donor/acceptor) is an active-site residue.

This sequence belongs to the phosphoglycerate mutase family. BPG-dependent PGAM subfamily.

The enzyme catalyses (2R)-2-phosphoglycerate = (2R)-3-phosphoglycerate. The protein operates within carbohydrate degradation; glycolysis; pyruvate from D-glyceraldehyde 3-phosphate: step 3/5. In terms of biological role, catalyzes the interconversion of 2-phosphoglycerate and 3-phosphoglycerate. This chain is 2,3-bisphosphoglycerate-dependent phosphoglycerate mutase, found in Staphylococcus aureus (strain MRSA252).